We begin with the raw amino-acid sequence, 382 residues long: D-galactonate dehydratase 1 (382 aa).

Asp-183 is a binding site for Mg(2+). The active-site Proton donor is the His-185. 2 residues coordinate Mg(2+): Glu-209 and Glu-235. His-285 functions as the Proton acceptor in the catalytic mechanism.

It belongs to the mandelate racemase/muconate lactonizing enzyme family. GalD subfamily. It depends on Mg(2+) as a cofactor.

It catalyses the reaction D-galactonate = 2-dehydro-3-deoxy-D-galactonate + H2O. It functions in the pathway carbohydrate acid metabolism; D-galactonate degradation; D-glyceraldehyde 3-phosphate and pyruvate from D-galactonate: step 1/3. In terms of biological role, catalyzes the dehydration of D-galactonate to 2-keto-3-deoxy-D-galactonate. In Escherichia coli (strain SMS-3-5 / SECEC), this protein is D-galactonate dehydratase 1.